A 1356-amino-acid polypeptide reads, in one-letter code: DNA-directed RNA polymerase subunit beta (1356 aa).

This sequence belongs to the RNA polymerase beta chain family. In terms of assembly, the RNAP catalytic core consists of 2 alpha, 1 beta, 1 beta' and 1 omega subunit. When a sigma factor is associated with the core the holoenzyme is formed, which can initiate transcription.

The enzyme catalyses RNA(n) + a ribonucleoside 5'-triphosphate = RNA(n+1) + diphosphate. Functionally, DNA-dependent RNA polymerase catalyzes the transcription of DNA into RNA using the four ribonucleoside triphosphates as substrates. This chain is DNA-directed RNA polymerase subunit beta, found in Caulobacter vibrioides (strain ATCC 19089 / CIP 103742 / CB 15) (Caulobacter crescentus).